The chain runs to 67 residues: Large ribosomal subunit protein bL32 (67 aa).

Basic residues predominate over residues 1–19; it reads MAVPKRKMSRSNTRARRSQ. A disordered region spans residues 1–21; the sequence is MAVPKRKMSRSNTRARRSQWK.

Belongs to the bacterial ribosomal protein bL32 family.

The polypeptide is Large ribosomal subunit protein bL32 (Arthrobacter sp. (strain FB24)).